The sequence spans 311 residues: Pyrimidine-specific ribonucleoside hydrolase RihA (311 aa).

The active site involves H240.

It belongs to the IUNH family. RihA subfamily.

In terms of biological role, hydrolyzes with equal efficiency cytidine or uridine to ribose and cytosine or uracil, respectively. The sequence is that of Pyrimidine-specific ribonucleoside hydrolase RihA from Escherichia coli (strain K12 / MC4100 / BW2952).